We begin with the raw amino-acid sequence, 197 residues long: ATP-dependent Clp protease proteolytic subunit 1 (197 aa).

The Nucleophile role is filled by Ser96. His121 is an active-site residue.

The protein belongs to the peptidase S14 family. As to quaternary structure, fourteen ClpP subunits assemble into 2 heptameric rings which stack back to back to give a disk-like structure with a central cavity, resembling the structure of eukaryotic proteasomes.

It localises to the cytoplasm. It carries out the reaction Hydrolysis of proteins to small peptides in the presence of ATP and magnesium. alpha-casein is the usual test substrate. In the absence of ATP, only oligopeptides shorter than five residues are hydrolyzed (such as succinyl-Leu-Tyr-|-NHMec, and Leu-Tyr-Leu-|-Tyr-Trp, in which cleavage of the -Tyr-|-Leu- and -Tyr-|-Trp bonds also occurs).. In terms of biological role, cleaves peptides in various proteins in a process that requires ATP hydrolysis. Has a chymotrypsin-like activity. Plays a major role in the degradation of misfolded proteins. This is ATP-dependent Clp protease proteolytic subunit 1 from Synechococcus sp. (strain ATCC 27144 / PCC 6301 / SAUG 1402/1) (Anacystis nidulans).